A 310-amino-acid chain; its full sequence is MGLCKCPKRKVTNLFCFEHRVNVCEHCLVANHAKCIVQSYLQWLQDSDYNPNCRLCNIPLASRETTRLVCYDLFHWACLNERAAQLPRNTAPAGYQCPSCNGPIFPPTNLAGPVASALREKLATVNWARAGLGLPLIDEVVSPEPEPLNTSDFSDWSSFNASSTPGPEEVDSASAAPAFYSQAPRPPASPGRPEQHTVIHMGNPEPLTHAPRKVYDTRDDDRTPGLHGDCDDDKYRRRPALGWLARLLRSRAGSRKRPLTLLQRAGLLLLLGLLGFLALLALMSRLGRAAADSDPNLDPLMNPHIRVGPS.

The B box-type; degenerate zinc finger occupies 1–43 (MGLCKCPKRKVTNLFCFEHRVNVCEHCLVANHAKCIVQSYLQW). Residues 1–266 (MGLCKCPKRK…RPLTLLQRAG (266 aa)) lie on the Cytoplasmic side of the membrane. The segment at 53 to 101 (CRLCNIPLASRETTRLVCYDLFHWACLNERAAQLPRNTAPAGYQCPSCN) adopts an RING-type; degenerate zinc-finger fold. Positions 145–231 (PEPLNTSDFS…RTPGLHGDCD (87 aa)) are disordered. A compositionally biased stretch (polar residues) spans 148–165 (LNTSDFSDWSSFNASSTP). Residues 213–224 (KVYDTRDDDRTP) show a composition bias toward basic and acidic residues. A helical transmembrane segment spans residues 267–287 (LLLLLGLLGFLALLALMSRLG). At 288 to 310 (RAAADSDPNLDPLMNPHIRVGPS) the chain is on the lumenal side.

Belongs to the ZFPL1 family. Interacts with GOLGA2/GM130. Phosphorylated. As to expression, expressed strongly in the exocrine pancreas.

The protein localises to the golgi apparatus. The protein resides in the cis-Golgi network membrane. Its function is as follows. Required for cis-Golgi integrity and efficient ER to Golgi transport. Involved in the maintenance of the integrity of the cis-Golgi, possibly via its interaction with GOLGA2/GM130. The chain is Zinc finger protein-like 1 (ZFPL1) from Homo sapiens (Human).